Reading from the N-terminus, the 1493-residue chain is ABC transporter C family member 7 (1493 aa).

The next 10 membrane-spanning stretches (helical) occupy residues 21 to 41 (FPMF…GSCV), 70 to 90 (VVIC…LSCF), 102 to 122 (LMIL…SFYI), 140 to 160 (VWWV…IALY), 165 to 185 (LVSV…LFLC), 309 to 329 (ILLS…APYL), 343 to 360 (YSNQ…AKLV), 423 to 443 (WYMH…LILY), 448 to 468 (LGSI…IPLA), and 535 to 555 (SVLW…CMLL). Residues 309-590 (ILLSTLFAFV…LPDTISMIVQ (282 aa)) form the ABC transmembrane type-1 1 domain. In terms of domain architecture, ABC transporter 1 spans 624–847 (VEVSNGAFSW…GTDFMELVGA (224 aa)). Position 659–666 (659–666 (GTVGSGKS)) interacts with ATP. Residues 863–898 (ASAQSTTSKESKVSNDEEKQEEDLPSPKGQLVQEEE) form a disordered region. Serine 888 is modified (phosphoserine). 6 consecutive transmembrane segments (helical) span residues 915–935 (LAYG…FQVL), 959–979 (GSTL…CILV), 1038–1055 (FSNL…IGVM), 1059–1081 (AWQV…QYYI), 1153–1173 (LSTV…EGVI), and 1177–1197 (FAGL…TLIW). The 283-residue stretch at 922–1204 (VPIILVVQIL…LIWTLCDLEN (283 aa)) folds into the ABC transmembrane type-1 2 domain. The ABC transporter 2 domain maps to 1241 to 1475 (ITICNLQVRY…KSSSFSKLVA (235 aa)). 1275 to 1282 (GRTGCGKS) serves as a coordination point for ATP.

Belongs to the ABC transporter superfamily. ABCC family. Conjugate transporter (TC 3.A.1.208) subfamily. As to expression, ubiquitous.

It is found in the membrane. It catalyses the reaction ATP + H2O + xenobioticSide 1 = ADP + phosphate + xenobioticSide 2.. Functionally, pump for glutathione S-conjugates. This Arabidopsis thaliana (Mouse-ear cress) protein is ABC transporter C family member 7 (ABCC7).